A 371-amino-acid chain; its full sequence is Histidinol-phosphate aminotransferase (371 aa).

At K229 the chain carries N6-(pyridoxal phosphate)lysine.

The protein belongs to the class-II pyridoxal-phosphate-dependent aminotransferase family. Histidinol-phosphate aminotransferase subfamily. As to quaternary structure, homodimer. The cofactor is pyridoxal 5'-phosphate.

It catalyses the reaction L-histidinol phosphate + 2-oxoglutarate = 3-(imidazol-4-yl)-2-oxopropyl phosphate + L-glutamate. It functions in the pathway amino-acid biosynthesis; L-histidine biosynthesis; L-histidine from 5-phospho-alpha-D-ribose 1-diphosphate: step 7/9. The chain is Histidinol-phosphate aminotransferase from Roseiflexus castenholzii (strain DSM 13941 / HLO8).